The following is a 613-amino-acid chain: Envelope glycoprotein gp95 (613 aa).

Residues 1–62 (MEAVIKAVLT…VLCEVTGVRA (62 aa)) form the signal peptide. The tract at residues 14–36 (GETSKKDSKKKPPATSKKDPEKT) is disordered. Residues 63-559 (DVHLLEQPGN…EWAVHLLKGL (497 aa)) lie on the Extracellular side of the membrane. Cystine bridges form between C87/C506, C121/C151, C191/C252, C265/C275, C360/C377, C417/C453, and C498/C505. N-linked (GlcNAc...) asparagine; by host glycans are attached at residues N120, N140, N157, N177, N230, N264, N271, N297, N303, N313, and N321. The segment at 184-233 (IPSVAGGCIGFTPYDSPAGVYGWDRREVTHILLTDPGNNPFFDKASNSSK) is binding to host receptor. The segment at 268 to 294 (MRQNWSICQDVWGRGPPENWCTSTGGT) is binding to host receptor. N-linked (GlcNAc...) asparagine; by host glycans are attached at residues N388 and N398. A fusion peptide region spans residues 425–445 (GPTARIFASILAPGVAAAQAL). N460 carries N-linked (GlcNAc...) asparagine; by host glycosylation. Residues 481-497 (LQNRAAIDFLLLAHGHG) form an immunosuppression region. The N-linked (GlcNAc...) asparagine; by host glycan is linked to N508. A helical transmembrane segment spans residues 560–580 (LLGLVVILLLVVCLPCLLQIV). Residues C572 and C575 are each lipidated (S-palmitoyl cysteine; by host). Over 581–613 (CGNIRKMINNSISYHTEYKKLQKAYGQPESRIV) the chain is Extracellular. A glycan (N-linked (GlcNAc...) asparagine; by host) is linked at N589.

It belongs to the Alpharetroviruses envelope glycoprotein family. Heterodimer with the transmembrane protein. The mature envelope protein (Env) consists of a trimer of SU-TM heterodimers attached by a labile interchain disulfide bond. Interacts with the host cell entry receptor TVB-S3; this interaction allows the viral attachment. In terms of assembly, heterodimer with the surface protein. The mature envelope protein (Env) consists of a trimer of SU-TM heterodimers attached by a labile interchain disulfide bond. Post-translationally, specific enzymatic cleavages in vivo yield mature proteins. Envelope glycoproteins are synthesized as an inactive precursor that is N-glycosylated and processed likely by host cell furin or by a furin-like protease in the Golgi to yield the mature SU and TM proteins. The cleavage site between SU and TM requires the minimal sequence [KR]-X-[KR]-R. The transmembrane protein is palmitoylated. Palmitoylation is necessary for glycoprotein function and infectivity.

It localises to the virion membrane. The protein localises to the host cell membrane. The surface protein (SU) attaches the virus to the host cell entry receptor TVB-S3/CAR1. This interaction triggers the refolding of the transmembrane protein (TM) thereby unmasking its fusion peptide and the formation of a reactive thiolate on Cys-100 to activate its fusogenic potential. Fusion occurs at the host cell plasma membrane. Functionally, the transmembrane protein (TM) acts as a class I viral fusion protein. Under the current model, the protein has at least 3 conformational states: pre-fusion native state, pre-hairpin intermediate state, and post-fusion hairpin state. During viral and target cell membrane fusion, the coiled coil regions (heptad repeats) assume a trimer-of-hairpins structure, positioning the fusion peptide in close proximity to the C-terminal region of the ectodomain. The formation of this structure appears to drive apposition and subsequent fusion of viral and target cell membranes. Membranes fusion leads to delivery of the nucleocapsid into the cytoplasm. The polypeptide is Envelope glycoprotein gp95 (env) (Rous sarcoma virus subgroup B (strain Schmidt-Ruppin) (RSV-SR-B)).